Reading from the N-terminus, the 747-residue chain is Fatty acid oxidation complex subunit alpha (747 aa).

The tract at residues 1–197 (MGASATNSVT…KMGLVDDVVP (197 aa)) is enoyl-CoA hydratase. The tract at residues 313–747 (RAIHRVGVLG…NIDEVTDVAS (435 aa)) is 3-hydroxyacyl-CoA dehydrogenase. The tract at residues 590–614 (YLYSNPTKNSSPTKNGNSPAKRNSF) is disordered. The segment covering 593-610 (SNPTKNSSPTKNGNSPAK) has biased composition (polar residues).

In the N-terminal section; belongs to the enoyl-CoA hydratase/isomerase family. This sequence in the central section; belongs to the 3-hydroxyacyl-CoA dehydrogenase family. Heterotetramer of two alpha chains (FadJ) and two beta chains (FadI).

The protein resides in the cytoplasm. The enzyme catalyses a (3S)-3-hydroxyacyl-CoA = a (2E)-enoyl-CoA + H2O. It catalyses the reaction a 4-saturated-(3S)-3-hydroxyacyl-CoA = a (3E)-enoyl-CoA + H2O. The catalysed reaction is a (3S)-3-hydroxyacyl-CoA + NAD(+) = a 3-oxoacyl-CoA + NADH + H(+). It carries out the reaction (3S)-3-hydroxybutanoyl-CoA = (3R)-3-hydroxybutanoyl-CoA. It participates in lipid metabolism; fatty acid beta-oxidation. Catalyzes the formation of a hydroxyacyl-CoA by addition of water on enoyl-CoA. Also exhibits 3-hydroxyacyl-CoA epimerase and 3-hydroxyacyl-CoA dehydrogenase activities. In Yersinia pseudotuberculosis serotype O:1b (strain IP 31758), this protein is Fatty acid oxidation complex subunit alpha.